The following is a 277-amino-acid chain: Ribonuclease HII (277 aa).

The region spanning 72–260 is the RNase H type-2 domain; that stretch reads EYIAGIDEAG…IKEMIEMKKE (189 aa). Aspartate 78, glutamate 79, and aspartate 170 together coordinate a divalent metal cation.

The protein belongs to the RNase HII family. Requires Mn(2+) as cofactor. Mg(2+) is required as a cofactor.

It is found in the cytoplasm. The enzyme catalyses Endonucleolytic cleavage to 5'-phosphomonoester.. Endonuclease that specifically degrades the RNA of RNA-DNA hybrids. This is Ribonuclease HII from Geobacillus sp. (strain WCH70).